A 90-amino-acid chain; its full sequence is NELL2-interacting cell ontogeny regulator 1 (90 aa).

Positions 1-26 (MVSSGYLQAVMLLLAVQLLCFRPSDA) are cleaved as a signal peptide.

It belongs to the NICOL family.

It is found in the secreted. Its function is as follows. mRNA-binding protein which interacts with a range of target mRNAs and may promote extracellular matrix production. This chain is NELL2-interacting cell ontogeny regulator 1, found in Salmo salar (Atlantic salmon).